A 650-amino-acid chain; its full sequence is Probable Xaa-Pro aminopeptidase P (650 aa).

The Mn(2+) site is built by Asp447, Asp458, Glu556, and Glu570.

The protein belongs to the peptidase M24B family. The cofactor is Mn(2+).

It carries out the reaction Release of any N-terminal amino acid, including proline, that is linked to proline, even from a dipeptide or tripeptide.. Functionally, catalyzes the removal of a penultimate prolyl residue from the N-termini of peptides. In Phaeosphaeria nodorum (strain SN15 / ATCC MYA-4574 / FGSC 10173) (Glume blotch fungus), this protein is Probable Xaa-Pro aminopeptidase P (AMPP).